Consider the following 486-residue polypeptide: Pup--protein ligase (486 aa).

A Mg(2+)-binding site is contributed by Glu-33. Arg-76 contacts ATP. Tyr-78 serves as a coordination point for Mg(2+). Asp-80 acts as the Proton acceptor in catalysis. Position 86 (Glu-86) interacts with Mg(2+). ATP contacts are provided by Thr-89 and Trp-451.

It belongs to the Pup ligase/Pup deamidase family. Pup-conjugating enzyme subfamily.

It catalyses the reaction ATP + [prokaryotic ubiquitin-like protein]-L-glutamate + [protein]-L-lysine = ADP + phosphate + N(6)-([prokaryotic ubiquitin-like protein]-gamma-L-glutamyl)-[protein]-L-lysine.. It functions in the pathway protein degradation; proteasomal Pup-dependent pathway. The protein operates within protein modification; protein pupylation. Functionally, catalyzes the covalent attachment of the prokaryotic ubiquitin-like protein modifier Pup to the proteasomal substrate proteins, thereby targeting them for proteasomal degradation. This tagging system is termed pupylation. The ligation reaction involves the side-chain carboxylate of the C-terminal glutamate of Pup and the side-chain amino group of a substrate lysine. The sequence is that of Pup--protein ligase from Bifidobacterium longum (strain DJO10A).